The primary structure comprises 174 residues: Secretory-abundant heat soluble protein 2 (174 aa).

The signal sequence occupies residues methionine 1–alanine 19. Residues glutamate 30 to proline 60 form an SAHS-c1 region. The tract at residues tyrosine 77–glutamate 105 is SAHS-c2. Asparagine 111 carries N-linked (GlcNAc...) asparagine glycosylation. The interval lysine 118 to lysine 172 is SAHS-c3.

Belongs to the Secretory-abundant heat soluble protein (SAHS) family.

The protein localises to the secreted. Secreted heat soluble protein acting as a molecular shield in water-deficient condition. Tardigrade-specific intrinsically disordered proteins (TDPs) are essential for desiccation tolerance by forming non-crystalline amorphous solids upon desiccation, and this vitrified state mirrors their protective capabilities. This chain is Secretory-abundant heat soluble protein 2, found in Ramazzottius varieornatus (Water bear).